The chain runs to 694 residues: Polyphosphate kinase (694 aa).

Asparagine 45 serves as a coordination point for ATP. Mg(2+) is bound by residues arginine 367 and arginine 397. Histidine 427 functions as the Phosphohistidine intermediate in the catalytic mechanism. ATP is bound by residues tyrosine 460, arginine 553, and histidine 580.

Belongs to the polyphosphate kinase 1 (PPK1) family. The cofactor is Mg(2+). Post-translationally, an intermediate of this reaction is the autophosphorylated ppk in which a phosphate is covalently linked to a histidine residue through a N-P bond.

The catalysed reaction is [phosphate](n) + ATP = [phosphate](n+1) + ADP. Its function is as follows. Catalyzes the reversible transfer of the terminal phosphate of ATP to form a long-chain polyphosphate (polyP). The protein is Polyphosphate kinase of Campylobacter jejuni subsp. jejuni serotype O:6 (strain 81116 / NCTC 11828).